The chain runs to 198 residues: Tumor necrosis factor receptor superfamily member 22 (198 aa).

The Cytoplasmic segment spans residues 1–20 (MFGFFCSLVSSLSRWFLWRR). A helical; Signal-anchor for type II membrane protein membrane pass occupies residues 21-41 (LLLLLLLLLLNLPLQVKFAML). The Extracellular segment spans residues 42–198 (ELHSFKCPAG…SVVVFRIIRR (157 aa)). 3 TNFR-Cys repeats span residues 47 to 82 (KCPAGEYWSKDVCCKNCSAGTFVKAPCEIPHTQGQC), 84 to 124 (KCHP…DRKC), and 125 to 165 (QCRT…NTVC). 9 disulfides stabilise this stretch: cysteine 48–cysteine 59, cysteine 60–cysteine 73, cysteine 63–cysteine 82, cysteine 85–cysteine 100, cysteine 103–cysteine 116, cysteine 106–cysteine 124, cysteine 126–cysteine 141, cysteine 144–cysteine 157, and cysteine 147–cysteine 165. An N-linked (GlcNAc...) asparagine glycan is attached at asparagine 62. Residue asparagine 158 is glycosylated (N-linked (GlcNAc...) asparagine).

In terms of tissue distribution, ubiquitous.

It localises to the cell membrane. The protein resides in the secreted. Functionally, receptor for the cytotoxic ligand TNFSF10/TRAIL. Lacks a cytoplasmic death domain and hence is not capable of inducing apoptosis. Protects cells against TRAIL mediated apoptosis possibly through ligand competition. Cannot induce the NF-kappa-B pathway. This chain is Tumor necrosis factor receptor superfamily member 22 (Tnfrsf22), found in Mus musculus (Mouse).